Here is a 757-residue protein sequence, read N- to C-terminus: uncharacterized protein (757 aa).

The S1 motif domain occupies 640 to 709 (GMILEGVVSN…ARKRIALTMR (70 aa)). Residues 711 to 741 (DDEPGGAKHKMPSENRSRERTAGRKPQRNDR) are compositionally biased toward basic and acidic residues. The tract at residues 711-757 (DDEPGGAKHKMPSENRSRERTAGRKPQRNDRAPANSAMADAFAKLKR) is disordered.

This is an uncharacterized protein from Neisseria meningitidis serogroup B (strain ATCC BAA-335 / MC58).